A 310-amino-acid polypeptide reads, in one-letter code: Ribonuclease Z (310 aa).

H61, H63, D65, H66, and H139 together coordinate Zn(2+). The Proton acceptor role is filled by D65. Positions 150 to 175 (EDDRPGRFDRPKAEELGVPVGPKFGR) are disordered. A compositionally biased stretch (basic and acidic residues) spans 153–164 (RPGRFDRPKAEE). Residues D210 and H268 each coordinate Zn(2+).

Belongs to the RNase Z family. Homodimer. It depends on Zn(2+) as a cofactor.

The catalysed reaction is Endonucleolytic cleavage of RNA, removing extra 3' nucleotides from tRNA precursor, generating 3' termini of tRNAs. A 3'-hydroxy group is left at the tRNA terminus and a 5'-phosphoryl group is left at the trailer molecule.. Its function is as follows. Zinc phosphodiesterase, which displays some tRNA 3'-processing endonuclease activity. Probably involved in tRNA maturation, by removing a 3'-trailer from precursor tRNA. The chain is Ribonuclease Z from Halorubrum lacusprofundi (strain ATCC 49239 / DSM 5036 / JCM 8891 / ACAM 34).